Here is an 87-residue protein sequence, read N- to C-terminus: Small ribosomal subunit protein uS15 (87 aa).

Belongs to the universal ribosomal protein uS15 family. As to quaternary structure, part of the 30S ribosomal subunit. Forms a bridge to the 50S subunit in the 70S ribosome, contacting the 23S rRNA.

In terms of biological role, one of the primary rRNA binding proteins, it binds directly to 16S rRNA where it helps nucleate assembly of the platform of the 30S subunit by binding and bridging several RNA helices of the 16S rRNA. Functionally, forms an intersubunit bridge (bridge B4) with the 23S rRNA of the 50S subunit in the ribosome. This Dehalococcoides mccartyi (strain ATCC BAA-2100 / JCM 16839 / KCTC 5957 / BAV1) protein is Small ribosomal subunit protein uS15.